Consider the following 151-residue polypeptide: Deoxyuridine 5'-triphosphate nucleotidohydrolase (151 aa).

Position 28 (Arg-28) interacts with Mg(2+). DUTP is bound by residues 72–74 (PRS), 86–89 (GVID), Tyr-92, Gly-97, Ile-99, and Arg-115.

The protein belongs to the dUTPase family. The cofactor is Mg(2+).

It catalyses the reaction dUTP + H2O = dUMP + diphosphate + H(+). In terms of biological role, this enzyme is involved in nucleotide metabolism: it produces dUMP, the immediate precursor of thymidine nucleotides and it decreases the intracellular concentration of dUTP so that uracil cannot be incorporated into DNA. This chain is Deoxyuridine 5'-triphosphate nucleotidohydrolase (OPG046), found in Monkeypox virus.